The chain runs to 411 residues: Solute carrier RCH1 (411 aa).

Residues Met-1–Lys-17 are Cytoplasmic-facing. Residues Val-18 to Ala-38 traverse the membrane as a helical segment. Residues His-39–Arg-52 are Extracellular-facing. Residues Ala-53 to Met-73 form a helical membrane-spanning segment. The Cytoplasmic portion of the chain corresponds to Ser-74–Phe-89. A helical transmembrane segment spans residues Thr-90–Ile-110. The Extracellular segment spans residues Lys-111 to Asp-120. A helical membrane pass occupies residues Trp-121–Val-141. Topologically, residues Met-142–Asp-150 are cytoplasmic. The helical transmembrane segment at Ile-151 to Leu-171 threads the bilayer. At Leu-172 to Lys-204 the chain is on the extracellular side. A helical membrane pass occupies residues Gln-205–Pro-225. Over Lys-226–Ser-242 the chain is Cytoplasmic. Residues Phe-243–Thr-263 traverse the membrane as a helical segment. Residues Ser-264–Ser-269 are Extracellular-facing. The chain crosses the membrane as a helical span at residues Ile-270–Phe-290. Topologically, residues Tyr-291 to Asp-329 are cytoplasmic. A helical membrane pass occupies residues Thr-330–Ser-350. The Extracellular portion of the chain corresponds to Ser-351–Gly-361. Residues Ile-362–Val-382 form a helical membrane-spanning segment. Topologically, residues Ser-383 to Lys-411 are cytoplasmic.

This sequence belongs to the bile acid:sodium symporter (BASS) (TC 2.A.28) family.

The protein localises to the cell membrane. It localises to the bud neck. Its function is as follows. Solute carrier protein that negatively regulates the cytosolic homeostasis in response to high levels of extracellular calcium. This is Solute carrier RCH1 from Candida albicans (strain SC5314 / ATCC MYA-2876) (Yeast).